The primary structure comprises 634 residues: Protein IcfG (634 aa).

Residues 306-361 form the HAMP domain; sequence HHSTVPILDLTKASQAIAAGDLDYEININQGNRQDEIGILGNSFIYMKNQIKTLIA. One can recognise a PPM-type phosphatase domain in the interval 385–633; that stretch reads PISLPDLQQW…DDITMIAVYR (249 aa).

Its function is as follows. Involved in cross-regulation of inorganic carbon and glucose metabolisms. In Synechocystis sp. (strain ATCC 27184 / PCC 6803 / Kazusa), this protein is Protein IcfG (icfG).